The sequence spans 433 residues: Xylose isomerase (433 aa).

Mg(2+) contacts are provided by D305 and D307.

The protein belongs to the xylose isomerase family. In terms of assembly, homotetramer. Mg(2+) is required as a cofactor.

The protein resides in the cytoplasm. The enzyme catalyses alpha-D-xylose = alpha-D-xylulofuranose. In Cereibacter sphaeroides (strain KD131 / KCTC 12085) (Rhodobacter sphaeroides), this protein is Xylose isomerase.